Reading from the N-terminus, the 401-residue chain is S-adenosylmethionine synthase 1 (401 aa).

Histidine 15 serves as a coordination point for ATP. Residue aspartate 17 participates in Mg(2+) binding. K(+) is bound at residue glutamate 43. L-methionine contacts are provided by glutamate 56 and glutamine 98. Residues 98–108 (QSPDIAQGVDK) form a flexible loop region. Residues 173-175 (DGK), 246-247 (RF), aspartate 255, 261-262 (RK), alanine 278, and lysine 282 contribute to the ATP site. Aspartate 255 contributes to the L-methionine binding site. Lysine 286 is an L-methionine binding site.

Belongs to the AdoMet synthase family. Homotetramer; dimer of dimers. It depends on Mg(2+) as a cofactor. K(+) serves as cofactor.

It localises to the cytoplasm. It carries out the reaction L-methionine + ATP + H2O = S-adenosyl-L-methionine + phosphate + diphosphate. The protein operates within amino-acid biosynthesis; S-adenosyl-L-methionine biosynthesis; S-adenosyl-L-methionine from L-methionine: step 1/1. Catalyzes the formation of S-adenosylmethionine (AdoMet) from methionine and ATP. The overall synthetic reaction is composed of two sequential steps, AdoMet formation and the subsequent tripolyphosphate hydrolysis which occurs prior to release of AdoMet from the enzyme. In Frankia casuarinae (strain DSM 45818 / CECT 9043 / HFP020203 / CcI3), this protein is S-adenosylmethionine synthase 1.